The chain runs to 22 residues: Mu-conotoxin GIIIC (22 aa).

3 disulfides stabilise this stretch: Cys-3/Cys-15, Cys-4/Cys-20, and Cys-10/Cys-21. 3 positions are modified to 4-hydroxyproline: Pro-6, Pro-7, and Pro-17. An Alanine amide modification is found at Ala-22.

It belongs to the conotoxin M superfamily. Expressed by the venom duct.

It localises to the secreted. Mu-conotoxins block voltage-gated sodium channels (Nav). This toxin shows potent activity on Nav1.4/SCN4A (IC(50)=286 nM), and weak activity on mNav1.6/SCN8A. In Conus geographus (Geography cone), this protein is Mu-conotoxin GIIIC.